Here is a 287-residue protein sequence, read N- to C-terminus: MINLRQQMPHYLRLMRFDKPVGIFLLLWPTLWAVWIAAKGAPSFKIAVIFIAGSVVMRAAGCIVNDFADRHLDKHVQRTQMRPLASGSVSVTEAMLLFAVLSLIAFTLVLLLNRLTVELAVIGILLALVYPFLKRFTHLPQLWLGVAFSWSIPMAFAATVGHVPAVAWLLFFAAVLWPIVYDTQYAMIDREDDVKVGIKSTAILFGRYDRLMIGLLQGSVLLTFGLLGWYLRFNYWFYLGLLVALGLMCYQQFLIRHRKPPDCFAAFRNNNWVGFFIFLGILLTHRN.

The next 9 membrane-spanning stretches (helical) occupy residues valine 21–alanine 41, phenylalanine 44–valine 64, valine 91–leucine 111, leucine 112–phenylalanine 132, leucine 139–threonine 159, valine 160–valine 180, leucine 211–leucine 231, tyrosine 235–isoleucine 255, and cysteine 263–leucine 283.

Belongs to the UbiA prenyltransferase family. Mg(2+) is required as a cofactor.

The protein resides in the cell inner membrane. The enzyme catalyses all-trans-octaprenyl diphosphate + 4-hydroxybenzoate = 4-hydroxy-3-(all-trans-octaprenyl)benzoate + diphosphate. The protein operates within cofactor biosynthesis; ubiquinone biosynthesis. Its function is as follows. Catalyzes the prenylation of para-hydroxybenzoate (PHB) with an all-trans polyprenyl group. Mediates the second step in the final reaction sequence of ubiquinone-8 (UQ-8) biosynthesis, which is the condensation of the polyisoprenoid side chain with PHB, generating the first membrane-bound Q intermediate 3-octaprenyl-4-hydroxybenzoate. In Coxiella burnetii (strain RSA 331 / Henzerling II), this protein is 4-hydroxybenzoate octaprenyltransferase.